Consider the following 383-residue polypeptide: Small ribosomal subunit protein mS31 (383 aa).

The transit peptide at 1 to 21 (MLRSLCSIAVRLGGARQPRLL) directs the protein to the mitochondrion. Residues 158–187 (VNEAQIKLQEQRKALLNDVREKVEQEEVEE) are a coiled coil.

The protein belongs to the mitochondrion-specific ribosomal protein mS31 family. As to quaternary structure, component of the mitochondrial ribosome small subunit (28S) which comprises a 12S rRNA and about 30 distinct proteins.

The protein localises to the mitochondrion. This chain is Small ribosomal subunit protein mS31 (mrps-31), found in Caenorhabditis elegans.